We begin with the raw amino-acid sequence, 271 residues long: Tryptophan synthase alpha chain (271 aa).

Residues Glu-51 and Asp-62 each act as proton acceptor in the active site.

This sequence belongs to the TrpA family. Tetramer of two alpha and two beta chains.

It catalyses the reaction (1S,2R)-1-C-(indol-3-yl)glycerol 3-phosphate + L-serine = D-glyceraldehyde 3-phosphate + L-tryptophan + H2O. The protein operates within amino-acid biosynthesis; L-tryptophan biosynthesis; L-tryptophan from chorismate: step 5/5. Its function is as follows. The alpha subunit is responsible for the aldol cleavage of indoleglycerol phosphate to indole and glyceraldehyde 3-phosphate. In Prochlorococcus marinus (strain NATL2A), this protein is Tryptophan synthase alpha chain.